We begin with the raw amino-acid sequence, 503 residues long: Angiopoietin-4 (503 aa).

The signal sequence occupies residues 1 to 24 (MLSQLAMLQGSLLLVVATMSVAQQ). Residues 84 to 238 (TQQVKQLEQA…RQSAALTNIE (155 aa)) adopt a coiled-coil conformation. N-linked (GlcNAc...) asparagine glycosylation is found at N96, N126, N140, N158, N247, N274, N311, N337, and N427. The Fibrinogen C-terminal domain occupies 282-502 (MAGEQVFQDC…ASRMMIRPLD (221 aa)). An intrachain disulfide couples C291 to C320. The cysteines at positions 444 and 457 are disulfide-linked.

In terms of assembly, homodimer; disulfide-linked. Interacts with TEK/TIE2. In terms of tissue distribution, highly expressed in the lung with much lower levels found in other tissues.

It localises to the secreted. Binds to TEK/TIE2, modulating ANGPT1 signaling. Can induce tyrosine phosphorylation of TEK/TIE2. Promotes endothelial cell survival, migration and angiogenesis. In Homo sapiens (Human), this protein is Angiopoietin-4 (ANGPT4).